The primary structure comprises 176 residues: MAKKRGKPEIDWTDDDKEIIWVSKSEIKRDSEHLKKLGAELIELTPQNLEKIPLDEDLKYAIRQAQSFKLEARRRQIQFIGKLLRNRDSAPIQDALDKVKNRHNQQQALLHKLELIRDQLINMGDASLNQLLSEYPQLDRQHLRNLIRMAQKEKQINKPAKNYHEILQYLKSELIV.

It belongs to the DarP family.

It localises to the cytoplasm. Functionally, member of a network of 50S ribosomal subunit biogenesis factors which assembles along the 30S-50S interface, preventing incorrect 23S rRNA structures from forming. Promotes peptidyl transferase center (PTC) maturation. This is Dual-action ribosomal maturation protein DarP from Haemophilus ducreyi (strain 35000HP / ATCC 700724).